Reading from the N-terminus, the 291-residue chain is Lipoyl synthase, organellar chromatophore (291 aa).

The [4Fe-4S] cluster site is built by Cys-33, Cys-38, Cys-44, Cys-59, Cys-63, Cys-66, and Ser-274. The region spanning 45–263 is the Radical SAM core domain; that stretch reads FAGGTATFLI…AIGELEMNFL (219 aa).

It belongs to the radical SAM superfamily. Lipoyl synthase family. [4Fe-4S] cluster is required as a cofactor.

The protein resides in the plastid. Its subcellular location is the organellar chromatophore. The catalysed reaction is [[Fe-S] cluster scaffold protein carrying a second [4Fe-4S](2+) cluster] + N(6)-octanoyl-L-lysyl-[protein] + 2 oxidized [2Fe-2S]-[ferredoxin] + 2 S-adenosyl-L-methionine + 4 H(+) = [[Fe-S] cluster scaffold protein] + N(6)-[(R)-dihydrolipoyl]-L-lysyl-[protein] + 4 Fe(3+) + 2 hydrogen sulfide + 2 5'-deoxyadenosine + 2 L-methionine + 2 reduced [2Fe-2S]-[ferredoxin]. The protein operates within protein modification; protein lipoylation via endogenous pathway; protein N(6)-(lipoyl)lysine from octanoyl-[acyl-carrier-protein]: step 2/2. Functionally, catalyzes the radical-mediated insertion of two sulfur atoms into the C-6 and C-8 positions of the octanoyl moiety bound to the lipoyl domains of lipoate-dependent enzymes, thereby converting the octanoylated domains into lipoylated derivatives. The polypeptide is Lipoyl synthase, organellar chromatophore (Paulinella chromatophora).